The sequence spans 133 residues: Large ribosomal subunit protein bL17 (133 aa).

The protein belongs to the bacterial ribosomal protein bL17 family. Part of the 50S ribosomal subunit. Contacts protein L32.

The sequence is that of Large ribosomal subunit protein bL17 from Pseudoalteromonas translucida (strain TAC 125).